We begin with the raw amino-acid sequence, 96 residues long: Putative pterin-4-alpha-carbinolamine dehydratase (96 aa).

This sequence belongs to the pterin-4-alpha-carbinolamine dehydratase family.

The enzyme catalyses (4aS,6R)-4a-hydroxy-L-erythro-5,6,7,8-tetrahydrobiopterin = (6R)-L-erythro-6,7-dihydrobiopterin + H2O. The sequence is that of Putative pterin-4-alpha-carbinolamine dehydratase from Prochlorococcus marinus (strain MIT 9215).